The primary structure comprises 194 residues: Ribonuclease HII (194 aa).

In terms of domain architecture, RNase H type-2 spans 1-194; that stretch reads MTVGVDEVGR…RLFPRDDGLR (194 aa). D6, E7, and D102 together coordinate a divalent metal cation.

It belongs to the RNase HII family. Requires Mn(2+) as cofactor. Mg(2+) serves as cofactor.

It localises to the cytoplasm. It catalyses the reaction Endonucleolytic cleavage to 5'-phosphomonoester.. Endonuclease that specifically degrades the RNA of RNA-DNA hybrids. This Synechococcus sp. (strain WH7803) protein is Ribonuclease HII.